A 213-amino-acid chain; its full sequence is Thymidylate kinase (213 aa).

10–17 (GLEGAGKT) is a binding site for ATP.

The protein belongs to the thymidylate kinase family.

It catalyses the reaction dTMP + ATP = dTDP + ADP. Functionally, phosphorylation of dTMP to form dTDP in both de novo and salvage pathways of dTTP synthesis. This chain is Thymidylate kinase, found in Escherichia coli O7:K1 (strain IAI39 / ExPEC).